We begin with the raw amino-acid sequence, 550 residues long: GMP synthase [glutamine-hydrolyzing] (550 aa).

The region spanning 39–232 (RILILDFGSQ…VHKICGCGGL (194 aa)) is the Glutamine amidotransferase type-1 domain. The Nucleophile role is filled by C116. Catalysis depends on residues H206 and E208. In terms of domain architecture, GMPS ATP-PPase spans 233 to 425 (WTPEHIIDLR…LGLPHSMIYR (193 aa)). Residue 260-266 (SGGVDSS) participates in ATP binding.

Homodimer.

It catalyses the reaction XMP + L-glutamine + ATP + H2O = GMP + L-glutamate + AMP + diphosphate + 2 H(+). Its pathway is purine metabolism; GMP biosynthesis; GMP from XMP (L-Gln route): step 1/1. Its function is as follows. Catalyzes the synthesis of GMP from XMP. The chain is GMP synthase [glutamine-hydrolyzing] from Acinetobacter baylyi (strain ATCC 33305 / BD413 / ADP1).